The chain runs to 97 residues: Large ribosomal subunit protein eL21 (97 aa).

The protein belongs to the eukaryotic ribosomal protein eL21 family.

The chain is Large ribosomal subunit protein eL21 (rpl21e) from Archaeoglobus fulgidus (strain ATCC 49558 / DSM 4304 / JCM 9628 / NBRC 100126 / VC-16).